The sequence spans 205 residues: Large ribosomal subunit protein bL9 (205 aa).

The tract at residues 160 to 205 is disordered; the sequence is RDRKSRNAAAASEVQDAPVEDGGDEVVSVDSVAAEDGGADASGGTA. Residues 184–195 are compositionally biased toward low complexity; the sequence is EVVSVDSVAAED.

The protein belongs to the bacterial ribosomal protein bL9 family.

In terms of biological role, binds to the 23S rRNA. The sequence is that of Large ribosomal subunit protein bL9 from Anaplasma phagocytophilum (strain HZ).